The chain runs to 539 residues: Glutamyl-tRNA(Gln) amidotransferase subunit A, mitochondrial (539 aa).

Active-site charge relay system residues include Lys94 and Ser181. Catalysis depends on Ser205, which acts as the Acyl-ester intermediate.

Belongs to the amidase family. GatA subfamily. As to quaternary structure, subunit of the heterotrimeric GatCAB amidotransferase (AdT) complex, composed of A, B and C subunits.

The protein localises to the mitochondrion. It carries out the reaction L-glutamyl-tRNA(Gln) + L-glutamine + ATP + H2O = L-glutaminyl-tRNA(Gln) + L-glutamate + ADP + phosphate + H(+). Allows the formation of correctly charged Gln-tRNA(Gln) through the transamidation of misacylated Glu-tRNA(Gln) in the mitochondria. The reaction takes place in the presence of glutamine and ATP through an activated gamma-phospho-Glu-tRNA(Gln). This is Glutamyl-tRNA(Gln) amidotransferase subunit A, mitochondrial from Mycosarcoma maydis (Corn smut fungus).